Reading from the N-terminus, the 239-residue chain is tRNA (guanine-N(7)-)-methyltransferase (239 aa).

The S-adenosyl-L-methionine site is built by Glu69, Glu94, Asp121, and Asp144. Residue Asp144 is part of the active site. Lys148 provides a ligand contact to substrate. Residues 150–155 (RHNKRR) are interaction with RNA. Residues Asp180 and 217–220 (TKFE) contribute to the substrate site.

Belongs to the class I-like SAM-binding methyltransferase superfamily. TrmB family. In terms of assembly, monomer.

It carries out the reaction guanosine(46) in tRNA + S-adenosyl-L-methionine = N(7)-methylguanosine(46) in tRNA + S-adenosyl-L-homocysteine. The protein operates within tRNA modification; N(7)-methylguanine-tRNA biosynthesis. Catalyzes the formation of N(7)-methylguanine at position 46 (m7G46) in tRNA. The chain is tRNA (guanine-N(7)-)-methyltransferase from Cronobacter sakazakii (strain ATCC BAA-894) (Enterobacter sakazakii).